The following is a 377-amino-acid chain: Nuclear pore complex protein NUP54 (377 aa).

Residues 1–18 show a composition bias toward low complexity; it reads MFGTPSSSPSFGTPSSTP. The segment at 1-104 is disordered; sequence MFGTPSSSPS…NTAQQQQQTP (104 aa). 7 consecutive repeat copies span residues 2-3, 11-12, 20-21, 27-28, 36-37, 49-50, and 87-88. Positions 2–88 are 7 X 2 AA repeats of F-G; sequence FGTPSSSPSF…FQQQPSSNFG (87 aa). Residues 19-32 show a composition bias toward polar residues; sequence AFGTSSPAFGTPSA. Over residues 39-104 the composition is skewed to low complexity; the sequence is PSNPSFSSGG…NTAQQQQQTP (66 aa).

It belongs to the NUP54 family. As to quaternary structure, part of the nuclear pore complex (NPC). The NPC has an eight-fold symmetrical structure comprising a central transport channel and two rings, the cytoplasmic and nuclear rings, to which eight filaments are attached. The cytoplasmic filaments have loose ends, while the nuclear filaments are joined in a distal ring, forming a nuclear basket. NPCs are highly dynamic in configuration and composition, and can be devided in 3 subcomplexes, the NUP62 subcomplex, the NUP107-160 subcomplex and the NUP93 subcomplex, containing approximately 30 different nucleoporin proteins.

The protein resides in the nucleus envelope. Its subcellular location is the nucleus. The protein localises to the nuclear pore complex. This is Nuclear pore complex protein NUP54 from Arabidopsis thaliana (Mouse-ear cress).